The following is a 663-amino-acid chain: Translation factor GUF1 homolog, mitochondrial (663 aa).

Residues Met1–Leu33 constitute a mitochondrion transit peptide. The 193-residue stretch at Glu55–Pro247 folds into the tr-type G domain. GTP contacts are provided by residues Ala64–Ser71, Asp140–His144, and Asn194–Asp197.

This sequence belongs to the TRAFAC class translation factor GTPase superfamily. Classic translation factor GTPase family. LepA subfamily.

The protein resides in the mitochondrion inner membrane. It catalyses the reaction GTP + H2O = GDP + phosphate + H(+). Functionally, promotes mitochondrial protein synthesis. May act as a fidelity factor of the translation reaction, by catalyzing a one-codon backward translocation of tRNAs on improperly translocated ribosomes. Binds to mitochondrial ribosomes in a GTP-dependent manner. The sequence is that of Translation factor GUF1 homolog, mitochondrial from Oryza sativa subsp. japonica (Rice).